Consider the following 160-residue polypeptide: Peripheral myelin protein 22 (160 aa).

M1 is a topological domain (cytoplasmic). A helical membrane pass occupies residues 2 to 31; that stretch reads LLLLLGILFLHIAVLVLLFVSTIVSQWLVG. The Extracellular portion of the chain corresponds to 32–64; the sequence is NGHRTDLWQNCTTSALGAVQHCYSSSVSEWLQS. N41 carries an N-linked (GlcNAc...) asparagine glycan. The helical transmembrane segment at 65 to 91 threads the bilayer; it reads VQATMILSVIFSVLSLFLFFCQLFTLT. At 92 to 95 the chain is on the cytoplasmic side; it reads KGGR. Residues 96-119 traverse the membrane as a helical segment; that stretch reads FYITGVFQILAGLCVMSAAAIYTV. Topologically, residues 120 to 133 are extracellular; it reads RHSEWHVNNDYSYG. A helical transmembrane segment spans residues 134 to 156; it reads FAYILAWVAFPLALLSGIIYVIL. At 157–160 the chain is on the cytoplasmic side; sequence RKRE.

It belongs to the PMP-22/EMP/MP20 family. Ubiquitinated by the DCX(DCAF13) E3 ubiquitin ligase complex, leading to its degradation. In terms of tissue distribution, found exclusively in the peripheral nervous system. Present in both myelinating and nonmyelinating Schwann cells. Found in the tumors of Schwann cell lineage where axons are present (neurofibromas) but not where axons are absent (schwannomas).

It is found in the cell membrane. Might be involved in growth regulation, and in myelinization in the peripheral nervous system. This is Peripheral myelin protein 22 (Pmp22) from Rattus norvegicus (Rat).